Reading from the N-terminus, the 376-residue chain is MNLSVLLVTLLLLSWTSAEKDLKVRVARSTNDETNLHWVKCGGSVPDGAVSIRNTYVSPARTEYVCKCFCQAGYYSTKDSKCHYPYGTKEMATSTNCYILVNRDNFELLEWKDGYAGSVPDNAVSTCKTNKIYVGKGAYGLGKIEPANHCLYYVWDGAETWTKTYQALTMNKDVIEQAMKDVKYQTEGVTVIKGKPEVMRRSTVNNQHCKEVTKTVTLTKDISTDERWDVTNSVTFGVTTTVTAGIPDVSSASLEISMQATMDFAHGASKTETQSYMVTVSVPVPPKQSCTVSMVAQVNKADIPFTATLIRTYRGGKKTQTTTKGVYRTIQVAETHADVEQCTIIGDAKDCPNASSTITTLRPKLKSKKPAKPAGK.

Positions 1 to 18 are cleaved as a signal peptide; it reads MNLSVLLVTLLLLSWTSA. Residues 19–27 constitute a propeptide that is removed on maturation; that stretch reads EKDLKVRVA.

This sequence belongs to the natterin family. Post-translationally, contains 4 disulfide bonds. In terms of tissue distribution, expressed by the venom gland.

It is found in the secreted. Its activity is regulated as follows. Inhibited by tissue-kallikrein inhibitor TKI and trasylol. Plasma kallikrein inhibitor PKSI527 and classical inhibitors of serine-, metallo-, thiol- or aspartate-peptidases evokes a minor inhibition of the peptide digestion. Its function is as follows. Shows nociceptive, edema-inducing and kininogenase activity with release of kallidin from low molecular weight kininogen. The cleavage occurs at Met-Lys bonds. This chain is Natterin-2, found in Thalassophryne nattereri (Copper Joe toadfish).